Reading from the N-terminus, the 482-residue chain is tRNA sulfurtransferase (482 aa).

One can recognise a THUMP domain in the interval 61–165 (LAIRDALTRI…DDRLLLIKGR (105 aa)). ATP-binding positions include 183–184 (LI), Lys265, Gly287, and Gln296. Cys344 and Cys456 are oxidised to a cystine. The Rhodanese domain occupies 404–482 (FGPNDVILDI…GFNNVKVYRP (79 aa)). The active-site Cysteine persulfide intermediate is the Cys456.

The protein belongs to the ThiI family.

It is found in the cytoplasm. It carries out the reaction [ThiI sulfur-carrier protein]-S-sulfanyl-L-cysteine + a uridine in tRNA + 2 reduced [2Fe-2S]-[ferredoxin] + ATP + H(+) = [ThiI sulfur-carrier protein]-L-cysteine + a 4-thiouridine in tRNA + 2 oxidized [2Fe-2S]-[ferredoxin] + AMP + diphosphate. The catalysed reaction is [ThiS sulfur-carrier protein]-C-terminal Gly-Gly-AMP + S-sulfanyl-L-cysteinyl-[cysteine desulfurase] + AH2 = [ThiS sulfur-carrier protein]-C-terminal-Gly-aminoethanethioate + L-cysteinyl-[cysteine desulfurase] + A + AMP + 2 H(+). It participates in cofactor biosynthesis; thiamine diphosphate biosynthesis. In terms of biological role, catalyzes the ATP-dependent transfer of a sulfur to tRNA to produce 4-thiouridine in position 8 of tRNAs, which functions as a near-UV photosensor. Also catalyzes the transfer of sulfur to the sulfur carrier protein ThiS, forming ThiS-thiocarboxylate. This is a step in the synthesis of thiazole, in the thiamine biosynthesis pathway. The sulfur is donated as persulfide by IscS. The sequence is that of tRNA sulfurtransferase from Escherichia coli O45:K1 (strain S88 / ExPEC).